The primary structure comprises 120 residues: Large ribosomal subunit protein bL21 (120 aa).

The protein belongs to the bacterial ribosomal protein bL21 family. As to quaternary structure, part of the 50S ribosomal subunit. Contacts protein L20.

In terms of biological role, this protein binds to 23S rRNA in the presence of protein L20. The polypeptide is Large ribosomal subunit protein bL21 (Rhizorhabdus wittichii (strain DSM 6014 / CCUG 31198 / JCM 15750 / NBRC 105917 / EY 4224 / RW1) (Sphingomonas wittichii)).